Consider the following 309-residue polypeptide: MPIRVPDELPAVNFLREENVFVMTTSRASGQEIRPLKVLILNLMPKKIETENQFLRLLSNSPLQVDIQLLRIDSRESRNTPAEHLNNFYCNFEDIQEQNFDGLIVTGAPLGLVEFNDVAYWPQIKQVLEWSKDHVTSTLFVCWAVQAALNILYGIPKQTRTDKLSGVYEHHILHPHALLTRGFDDSFLAPHSRYADFPAALIRDYTDLEILAETEEGDAYLFASKDKRIAFVTGHPEYDAQTLAQEYFRDVEAGLNPDVPYNYFPHNDPQNTPRASWRSHGNLLFTNWLNYYVYQITPYDLRHMNPTLD.

Cys-142 serves as the catalytic Acyl-thioester intermediate. The substrate site is built by Lys-163 and Ser-192. The active-site Proton acceptor is the His-235. Glu-237 is a catalytic residue. Arg-249 contacts substrate.

Belongs to the MetA family. As to quaternary structure, homodimer.

Its subcellular location is the cytoplasm. It catalyses the reaction L-homoserine + succinyl-CoA = O-succinyl-L-homoserine + CoA. It participates in amino-acid biosynthesis; L-methionine biosynthesis via de novo pathway; O-succinyl-L-homoserine from L-homoserine: step 1/1. In terms of biological role, transfers a succinyl group from succinyl-CoA to L-homoserine, forming succinyl-L-homoserine. The protein is Homoserine O-succinyltransferase of Escherichia fergusonii (strain ATCC 35469 / DSM 13698 / CCUG 18766 / IAM 14443 / JCM 21226 / LMG 7866 / NBRC 102419 / NCTC 12128 / CDC 0568-73).